A 234-amino-acid polypeptide reads, in one-letter code: Short neuropeptide F (234 aa).

An N-terminal signal peptide occupies residues 1-22; that stretch reads MYRINLTTFTLLLVLAVGSLMS. Residues 23 to 56 constitute a propeptide that is removed on maturation; that stretch reads ESLHPSDGAINDLYEYLLQREYAAPVSYADHQIK. Phe69 and Phe101 each carry phenylalanine amide. Tryptophan amide is present on Trp132. Phe165 carries the post-translational modification Phenylalanine amide. Residues 181 to 190 show a composition bias toward polar residues; the sequence is TTGQQAQPAN. A disordered region spans residues 181-234; it reads TTGQQAQPANEASEKRAPTQRLRWGRSDPALAKDSSEDKALDVEESENTNADDK. Trp204 carries the post-translational modification Tryptophan amide. The propeptide occupies 207-234; the sequence is SDPALAKDSSEDKALDVEESENTNADDK.

This sequence belongs to the NPY family. In terms of tissue distribution, expressed in all body parts of larva, pupae and adults.

It localises to the secreted. Plays a role in controlling food intake and regulating body size. The chain is Short neuropeptide F from Anopheles gambiae (African malaria mosquito).